Consider the following 428-residue polypeptide: Putative ankyrin repeat protein FPV234 (428 aa).

ANK repeat units follow at residues 6-35, 39-68, 71-100, 103-132, 137-169, 174-202, 206-238, and 242-271; these read KDDILICEAIENYDSESLRNILENGADPNV, YQYSHLHNAIEKKNGSAVSLLLKHGADPNI, FFTPPLHKAIKKGCVDIARSLLEYGAIVNL, YCLKPIHIAANRTESKIVKLLIEYGADINS, NGKYPIHYAMKVYDPFRLKIIKVLLDHGADINK, TNTSPLYETRFITDDLLDYIISRGANINI, MGRNILHEIILRNGYNDFSNILVLIDHGADINA, and EGNTPFMLHTINNNAIILANYIVSLYYLSY.

The sequence is that of Putative ankyrin repeat protein FPV234 from Fowlpox virus (strain NVSL) (FPV).